We begin with the raw amino-acid sequence, 350 residues long: Biotin synthase (350 aa).

Positions 38-256 (NHVQVSTLLS…IAVARIMMPE (219 aa)) constitute a Radical SAM core domain. [4Fe-4S] cluster-binding residues include C53, C57, and C60. Residues C97, C128, C188, and R260 each contribute to the [2Fe-2S] cluster site.

This sequence belongs to the radical SAM superfamily. Biotin synthase family. Homodimer. It depends on [4Fe-4S] cluster as a cofactor. [2Fe-2S] cluster serves as cofactor.

It carries out the reaction (4R,5S)-dethiobiotin + (sulfur carrier)-SH + 2 reduced [2Fe-2S]-[ferredoxin] + 2 S-adenosyl-L-methionine = (sulfur carrier)-H + biotin + 2 5'-deoxyadenosine + 2 L-methionine + 2 oxidized [2Fe-2S]-[ferredoxin]. Its pathway is cofactor biosynthesis; biotin biosynthesis; biotin from 7,8-diaminononanoate: step 2/2. Catalyzes the conversion of dethiobiotin (DTB) to biotin by the insertion of a sulfur atom into dethiobiotin via a radical-based mechanism. The sequence is that of Biotin synthase from Aliivibrio fischeri (strain MJ11) (Vibrio fischeri).